Here is a 640-residue protein sequence, read N- to C-terminus: 1,4-alpha-glucan branching enzyme GlgB (640 aa).

Asp318 functions as the Nucleophile in the catalytic mechanism. Glu371 functions as the Proton donor in the catalytic mechanism.

It belongs to the glycosyl hydrolase 13 family. GlgB subfamily. In terms of assembly, monomer.

It carries out the reaction Transfers a segment of a (1-&gt;4)-alpha-D-glucan chain to a primary hydroxy group in a similar glucan chain.. Its pathway is glycan biosynthesis; glycogen biosynthesis. Functionally, catalyzes the formation of the alpha-1,6-glucosidic linkages in glycogen by scission of a 1,4-alpha-linked oligosaccharide from growing alpha-1,4-glucan chains and the subsequent attachment of the oligosaccharide to the alpha-1,6 position. This chain is 1,4-alpha-glucan branching enzyme GlgB, found in Francisella philomiragia subsp. philomiragia (strain ATCC 25017 / CCUG 19701 / FSC 153 / O#319-036).